The following is a 107-amino-acid chain: Anti-adapter protein IraM (107 aa).

It belongs to the IraM/RssC family.

The protein localises to the cytoplasm. Functionally, inhibits RpoS proteolysis by regulating RssB activity, thereby increasing the stability of the sigma stress factor RpoS during magnesium starvation. The polypeptide is Anti-adapter protein IraM (Escherichia coli (strain K12 / MC4100 / BW2952)).